Consider the following 504-residue polypeptide: Malonyl-CoA decarboxylase, mitochondrial (504 aa).

The transit peptide at 1–50 (MRGLRRGLSRLGPRLGPWAVPRSLRRVLRAAGPWRGQSSAGSVSERGGAS) directs the protein to the mitochondrion. The alpha-helical domain stretch occupies residues 51–201 (MEEVLSRSVP…VLKNMLSEWF (151 aa)). The segment at 202-504 (STGFLNLERV…VSQFQQNSKL (303 aa)) is catalytic domain. The Proton acceptor role is filled by serine 340. Histidine 434 functions as the Proton donor in the catalytic mechanism. A Microbody targeting signal motif is present at residues 502-504 (SKL).

The protein localises to the mitochondrion. Its subcellular location is the cytoplasm. It is found in the peroxisome. The catalysed reaction is malonyl-CoA + H(+) = acetyl-CoA + CO2. Its pathway is metabolic intermediate biosynthesis; acetyl-CoA biosynthesis; acetyl-CoA from malonyl-CoA: step 1/1. Catalyzes the conversion of malonyl-CoA to acetyl-CoA. In the fatty acid biosynthesis MCD selectively removes malonyl-CoA and thus assures that methyl-malonyl-CoA is the only chain elongating substrate for fatty acid synthase and that fatty acids with multiple methyl side chains are produced. The sequence is that of Malonyl-CoA decarboxylase, mitochondrial (MLYCD) from Anser anser anser (Western greylag goose).